Reading from the N-terminus, the 201-residue chain is Pyridoxine/pyridoxamine 5'-phosphate oxidase (201 aa).

Residues 49-54 (RMVLLK), 64-65 (YT), Lys-71, and Gln-93 contribute to the FMN site. A substrate-binding site is contributed by Lys-54. 3 residues coordinate substrate: Tyr-111, Arg-115, and Ser-119. Residues 128–129 (QS) and Trp-172 contribute to the FMN site. Substrate is bound at residue 178–180 (RLH). Arg-182 serves as a coordination point for FMN.

It belongs to the pyridoxamine 5'-phosphate oxidase family. As to quaternary structure, homodimer. The cofactor is FMN.

It carries out the reaction pyridoxamine 5'-phosphate + O2 + H2O = pyridoxal 5'-phosphate + H2O2 + NH4(+). The enzyme catalyses pyridoxine 5'-phosphate + O2 = pyridoxal 5'-phosphate + H2O2. It functions in the pathway cofactor metabolism; pyridoxal 5'-phosphate salvage; pyridoxal 5'-phosphate from pyridoxamine 5'-phosphate: step 1/1. The protein operates within cofactor metabolism; pyridoxal 5'-phosphate salvage; pyridoxal 5'-phosphate from pyridoxine 5'-phosphate: step 1/1. Its function is as follows. Catalyzes the oxidation of either pyridoxine 5'-phosphate (PNP) or pyridoxamine 5'-phosphate (PMP) into pyridoxal 5'-phosphate (PLP). In Roseobacter denitrificans (strain ATCC 33942 / OCh 114) (Erythrobacter sp. (strain OCh 114)), this protein is Pyridoxine/pyridoxamine 5'-phosphate oxidase.